The chain runs to 741 residues: Transketolase, chloroplastic (741 aa).

Residues 1–67 (MASSSSLTLS…TKQQFSVRAS (67 aa)) constitute a chloroplast transit peptide. His103 provides a ligand contact to substrate. Residues His143 and 192–194 (GPL) contribute to the thiamine diphosphate site. Asp233 is a Mg(2+) binding site. Thiamine diphosphate contacts are provided by Gly234 and Asn263. 2 residues coordinate Mg(2+): Asn263 and Ile265. The substrate site is built by His340, Arg434, and Ser461. His340 provides a ligand contact to thiamine diphosphate. Thiamine diphosphate is bound by residues Glu488 and Phe515. The active-site Proton donor is the Glu488. Substrate contacts are provided by His539, Asp547, and Arg598.

It belongs to the transketolase family. Homodimer. Requires Mg(2+) as cofactor. Ca(2+) serves as cofactor. Mn(2+) is required as a cofactor. It depends on Co(2+) as a cofactor. The cofactor is thiamine diphosphate.

The protein resides in the plastid. Its subcellular location is the chloroplast thylakoid membrane. It catalyses the reaction D-sedoheptulose 7-phosphate + D-glyceraldehyde 3-phosphate = aldehydo-D-ribose 5-phosphate + D-xylulose 5-phosphate. Its pathway is carbohydrate biosynthesis; Calvin cycle. In terms of biological role, catalyzes the reversible transfer of a two-carbon ketol group from fructose-6-phosphate or sedoheptulose-7-phosphate to glyceraldehyde-3-phosphate to yield xylulose-5-phosphate and erythrose-4-phosphate or ribose-5-phosphate, respectively. The protein is Transketolase, chloroplastic of Solanum tuberosum (Potato).